The following is a 492-amino-acid chain: 3-octaprenyl-4-hydroxybenzoate carboxy-lyase (492 aa).

Asn-175 contacts Mn(2+). Residues 178–180 (IYR), 192–194 (RWL), and 197–198 (RG) each bind prenylated FMN. Glu-241 contacts Mn(2+). The active-site Proton donor is Asp-290.

The protein belongs to the UbiD family. In terms of assembly, homohexamer. It depends on prenylated FMN as a cofactor. The cofactor is Mn(2+).

It is found in the cell membrane. The catalysed reaction is a 4-hydroxy-3-(all-trans-polyprenyl)benzoate + H(+) = a 2-(all-trans-polyprenyl)phenol + CO2. The protein operates within cofactor biosynthesis; ubiquinone biosynthesis. Catalyzes the decarboxylation of 3-octaprenyl-4-hydroxy benzoate to 2-octaprenylphenol, an intermediate step in ubiquinone biosynthesis. The sequence is that of 3-octaprenyl-4-hydroxybenzoate carboxy-lyase from Salmonella paratyphi A (strain ATCC 9150 / SARB42).